We begin with the raw amino-acid sequence, 338 residues long: Ketol-acid reductoisomerase (NADP(+)) (338 aa).

The KARI N-terminal Rossmann domain occupies 1–181 (MNVFYDKDAD…GGGRAGIIET (181 aa)). NADP(+) is bound by residues 24–27 (YGSQ), arginine 47, and serine 52. Histidine 107 is a catalytic residue. Position 133 (glycine 133) interacts with NADP(+). A KARI C-terminal knotted domain is found at 182-327 (NFREETETDL…AKLRAMMPWI (146 aa)). Aspartate 190, glutamate 194, glutamate 226, and glutamate 230 together coordinate Mg(2+). A substrate-binding site is contributed by serine 251.

This sequence belongs to the ketol-acid reductoisomerase family. Mg(2+) is required as a cofactor.

The catalysed reaction is (2R)-2,3-dihydroxy-3-methylbutanoate + NADP(+) = (2S)-2-acetolactate + NADPH + H(+). It carries out the reaction (2R,3R)-2,3-dihydroxy-3-methylpentanoate + NADP(+) = (S)-2-ethyl-2-hydroxy-3-oxobutanoate + NADPH + H(+). The protein operates within amino-acid biosynthesis; L-isoleucine biosynthesis; L-isoleucine from 2-oxobutanoate: step 2/4. Its pathway is amino-acid biosynthesis; L-valine biosynthesis; L-valine from pyruvate: step 2/4. In terms of biological role, involved in the biosynthesis of branched-chain amino acids (BCAA). Catalyzes an alkyl-migration followed by a ketol-acid reduction of (S)-2-acetolactate (S2AL) to yield (R)-2,3-dihydroxy-isovalerate. In the isomerase reaction, S2AL is rearranged via a Mg-dependent methyl migration to produce 3-hydroxy-3-methyl-2-ketobutyrate (HMKB). In the reductase reaction, this 2-ketoacid undergoes a metal-dependent reduction by NADPH to yield (R)-2,3-dihydroxy-isovalerate. The chain is Ketol-acid reductoisomerase (NADP(+)) from Burkholderia ambifaria (strain MC40-6).